The chain runs to 223 residues: Small ribosomal subunit protein uS3 (223 aa).

The 79-residue stretch at 39-117 (IREFLRKKPS…RPELNAKLVA (79 aa)) folds into the KH type-2 domain.

The protein belongs to the universal ribosomal protein uS3 family. Part of the 30S ribosomal subunit. Forms a tight complex with proteins S10 and S14.

Its function is as follows. Binds the lower part of the 30S subunit head. Binds mRNA in the 70S ribosome, positioning it for translation. This is Small ribosomal subunit protein uS3 from Chlamydia abortus (strain DSM 27085 / S26/3) (Chlamydophila abortus).